The chain runs to 363 residues: 3,4-dihydroxy-2-butanone 4-phosphate synthase (363 aa).

The segment at methionine 1–arginine 202 is DHBP synthase. D-ribulose 5-phosphate-binding positions include arginine 28 to glutamate 29, aspartate 33, arginine 141 to threonine 145, and glutamate 165. Glutamate 29 is a binding site for Mg(2+). Histidine 144 lines the Mg(2+) pocket. The GTP cyclohydrolase II-like stretch occupies residues serine 205 to lysine 363.

The protein in the N-terminal section; belongs to the DHBP synthase family. It in the C-terminal section; belongs to the GTP cyclohydrolase II family. It depends on Mg(2+) as a cofactor. Mn(2+) serves as cofactor.

The enzyme catalyses D-ribulose 5-phosphate = (2S)-2-hydroxy-3-oxobutyl phosphate + formate + H(+). Its pathway is cofactor biosynthesis; riboflavin biosynthesis; 2-hydroxy-3-oxobutyl phosphate from D-ribulose 5-phosphate: step 1/1. Functionally, catalyzes the conversion of D-ribulose 5-phosphate to formate and 3,4-dihydroxy-2-butanone 4-phosphate. This is 3,4-dihydroxy-2-butanone 4-phosphate synthase (ribB) from Neisseria meningitidis serogroup A / serotype 4A (strain DSM 15465 / Z2491).